Here is a 211-residue protein sequence, read N- to C-terminus: 2,3-bisphosphoglycerate-dependent phosphoglycerate mutase (211 aa).

Substrate contacts are provided by residues 9-16 (RHGQSDWN), 22-23 (TG), R61, 88-91 (ERDY), K99, 115-116 (RR), and 159-160 (GN). The active-site Tele-phosphohistidine intermediate is H10. E88 serves as the catalytic Proton donor/acceptor.

Belongs to the phosphoglycerate mutase family. BPG-dependent PGAM subfamily. In terms of assembly, homodimer.

It catalyses the reaction (2R)-2-phosphoglycerate = (2R)-3-phosphoglycerate. It functions in the pathway carbohydrate degradation; glycolysis; pyruvate from D-glyceraldehyde 3-phosphate: step 3/5. Its function is as follows. Catalyzes the interconversion of 2-phosphoglycerate and 3-phosphoglycerate. The chain is 2,3-bisphosphoglycerate-dependent phosphoglycerate mutase from Rhizobium etli (strain CIAT 652).